Consider the following 296-residue polypeptide: GTPase Era (296 aa).

The region spanning 7-174 (RTGFVAVVGR…LDEIAARLPE (168 aa)) is the Era-type G domain. Residues 15-22 (GRPNVGKS) are G1. Residue 15–22 (GRPNVGKS) coordinates GTP. Positions 41-45 (QTTRH) are G2. Residues 62 to 65 (DTPG) form a G3 region. GTP-binding positions include 62 to 66 (DTPGF) and 123 to 126 (SKID). Positions 123-126 (SKID) are G4. Positions 153–155 (VSA) are G5. The region spanning 205-281 (VGDELPYGCT…HLEVYIKVRK (77 aa)) is the KH type-2 domain.

It belongs to the TRAFAC class TrmE-Era-EngA-EngB-Septin-like GTPase superfamily. Era GTPase family. In terms of assembly, monomer.

It localises to the cytoplasm. The protein resides in the cell inner membrane. In terms of biological role, an essential GTPase that binds both GDP and GTP, with rapid nucleotide exchange. Plays a role in 16S rRNA processing and 30S ribosomal subunit biogenesis and possibly also in cell cycle regulation and energy metabolism. This is GTPase Era from Bordetella petrii (strain ATCC BAA-461 / DSM 12804 / CCUG 43448).